We begin with the raw amino-acid sequence, 197 residues long: uncharacterized protein (197 aa).

Over residues 1 to 10 (MKNNYTSLKS) the composition is skewed to polar residues. Disordered regions lie at residues 1–46 (MKNN…PPYS) and 54–73 (LVPEDSSTGPTETANPNVER). Residues 18–37 (LKTGHEIDLEKGPLPEHNSE) are compositionally biased toward basic and acidic residues. The segment covering 58 to 69 (DSSTGPTETANP) has biased composition (polar residues). 2 helical membrane passes run 83 to 105 (NIYSLLRLLIAVLAVSVVFFTAW) and 120 to 142 (AFFVLIGLTCLILLITMILEPGL).

The protein belongs to the WTF family.

It is found in the endoplasmic reticulum membrane. This is an uncharacterized protein from Schizosaccharomyces pombe (strain 972 / ATCC 24843) (Fission yeast).